The following is a 209-amino-acid chain: Transmembrane emp24 domain-containing protein B (209 aa).

Positions Met1–Ala24 are cleaved as a signal peptide. Residues Leu25 to Arg174 are Lumenal-facing. In terms of domain architecture, GOLD spans Gln34–Ser119. The helical transmembrane segment at Val175–Trp195 threads the bilayer. Residues Tyr196–Val209 lie on the Cytoplasmic side of the membrane.

This sequence belongs to the EMP24/GP25L family.

Its subcellular location is the cytoplasmic vesicle membrane. Functionally, could have a role in the budding of coatomer-coated and other species of coated vesicles. The protein is Transmembrane emp24 domain-containing protein B (empB) of Dictyostelium discoideum (Social amoeba).